The primary structure comprises 89 residues: Small ribosomal subunit protein uS15 (89 aa).

It belongs to the universal ribosomal protein uS15 family. As to quaternary structure, part of the 30S ribosomal subunit. Forms a bridge to the 50S subunit in the 70S ribosome, contacting the 23S rRNA.

Functionally, one of the primary rRNA binding proteins, it binds directly to 16S rRNA where it helps nucleate assembly of the platform of the 30S subunit by binding and bridging several RNA helices of the 16S rRNA. Forms an intersubunit bridge (bridge B4) with the 23S rRNA of the 50S subunit in the ribosome. This is Small ribosomal subunit protein uS15 from Chlamydia pneumoniae (Chlamydophila pneumoniae).